The sequence spans 474 residues: Capsid vertex component 1 (474 aa).

The protein belongs to the herpesviridae CVC1 protein family. As to quaternary structure, interacts (via C-terminus) with capsid vertex component 2/CVC2.

The protein localises to the virion. The protein resides in the host nucleus. Capsid vertex-specific component that plays a role during viral DNA encapsidation, assuring correct genome cleavage and presumably stabilizing capsids that contain full-length viral genomes. The chain is Capsid vertex component 1 from Alcelaphine herpesvirus 1 (strain C500) (AlHV-1).